Consider the following 372-residue polypeptide: tRNA-specific 2-thiouridylase MnmA (372 aa).

Residues 11–18 and Met37 contribute to the ATP site; that span reads GMSGGVDS. The interaction with target base in tRNA stretch occupies residues 97 to 99; that stretch reads NPD. Catalysis depends on Cys102, which acts as the Nucleophile. Cysteines 102 and 199 form a disulfide. Gly126 serves as a coordination point for ATP. An interaction with tRNA region spans residues 149–151; sequence KDQ. Cys199 functions as the Cysteine persulfide intermediate in the catalytic mechanism. The tract at residues 309 to 310 is interaction with tRNA; it reads RY.

This sequence belongs to the MnmA/TRMU family.

The protein resides in the cytoplasm. The catalysed reaction is S-sulfanyl-L-cysteinyl-[protein] + uridine(34) in tRNA + AH2 + ATP = 2-thiouridine(34) in tRNA + L-cysteinyl-[protein] + A + AMP + diphosphate + H(+). Catalyzes the 2-thiolation of uridine at the wobble position (U34) of tRNA, leading to the formation of s(2)U34. The protein is tRNA-specific 2-thiouridylase MnmA of Staphylococcus aureus (strain MSSA476).